The sequence spans 291 residues: MKEKEKLIIETALKLFAQKGYNSTSVQEIAKECKISKGAFYIYFPSKEALLLSMLNYYYDKTFTRILNIKTKGDSPRTAYRKQLTVLYENILEHKDFISMQLKEGSLPYTEEVEQCAKKIRQSSLQFHIDSLLNIYGKKAEPYTAELCFLIEGISQIYLECMILLGYTVKPSQLADIIMNRIDDMVKGMSERNDKPFITLEEASSLFGPLTHGRPDPLTESIVKSLRDKINSLNTNSSLELSESLDILEAEMKKKTPKLAIIKGMIHNLTESEALAKDAEQLKYLLKQQHI.

Residues 2-62 (KEKEKLIIET…SMLNYYYDKT (61 aa)) enclose the HTH tetR-type domain. Residues 25-44 (SVQEIAKECKISKGAFYIYF) constitute a DNA-binding region (H-T-H motif).

This is an uncharacterized protein from Bacillus subtilis (strain 168).